Here is a 143-residue protein sequence, read N- to C-terminus: NADH-quinone oxidoreductase subunit A (143 aa).

A run of 3 helical transmembrane segments spans residues 8–28, 63–83, and 93–113; these read FGNV…GYLT, FYVV…LYPW, and FALI…AYAW.

It belongs to the complex I subunit 3 family. In terms of assembly, NDH-1 is composed of 14 different subunits. Subunits NuoA, H, J, K, L, M, N constitute the membrane sector of the complex.

The protein localises to the cell inner membrane. The enzyme catalyses a quinone + NADH + 5 H(+)(in) = a quinol + NAD(+) + 4 H(+)(out). Its function is as follows. NDH-1 shuttles electrons from NADH, via FMN and iron-sulfur (Fe-S) centers, to quinones in the respiratory chain. The immediate electron acceptor for the enzyme in this species is believed to be a menaquinone. Couples the redox reaction to proton translocation (for every two electrons transferred, four hydrogen ions are translocated across the cytoplasmic membrane), and thus conserves the redox energy in a proton gradient. The sequence is that of NADH-quinone oxidoreductase subunit A from Pelodictyon phaeoclathratiforme (strain DSM 5477 / BU-1).